The primary structure comprises 670 residues: Septation protein 7 (670 aa).

Residues 33 to 357 (KGIKFTFMVV…ETYRTERLTK (325 aa)) enclose the Septin-type G domain. The tract at residues 43-50 (GESGTGKT) is G1 motif. GTP contacts are provided by residues 43 to 50 (GESGTGKT), Gly-137, 217 to 225 (KADSFTLNE), and Arg-306. The G3 motif stretch occupies residues 134-137 (DTPG). Residues 216-219 (GKAD) form a G4 motif region. Disordered stretches follow at residues 383–513 (LNDS…QRNQ) and 574–670 (LNRQ…VSNH). A compositionally biased stretch (low complexity) spans 395-404 (NNNNNNNNNN). The span at 405-421 (ASTIPSMSNLAQLTTST) shows a compositional bias: polar residues. Composition is skewed to low complexity over residues 433–446 (SITS…KSTS) and 463–473 (SSFTSSTSTVS). The stretch at 472–606 (VSLEGGEKEG…SVQSGGVDDG (135 aa)) forms a coiled coil. Positions 476–487 (GGEKEGGHHDRG) are enriched in basic and acidic residues. Positions 489 to 500 (NSTSTNNNNNNN) are enriched in low complexity. Positions 631 to 645 (QSHEYDNSEYHHDDS) are enriched in basic and acidic residues.

Belongs to the TRAFAC class TrmE-Era-EngA-EngB-Septin-like GTPase superfamily. Septin GTPase family. Component of the septin complex which consists of CDC3, CDC10, CDC11, CDC12 and probably SEP7. The purified septin complex appeared to have a stoichiometry of 2 CDC3, 1 to 2 CDC10, 1 CDC11, 2 CDC12, and 1 or none SEP7 subunit. Induction of hyphal growth brings about important modifications in septin ring dynamics, because the rings were found in a different state from those of yeast cells. This hyphal-specific state contains a core of stable septins (SEP7, CDC3, and CDC12), and it shows a high CDC10 turnover between the ring and the cytoplasm. Interacts with GIN4. Phosphorylated by GIN4 which stabilizes the GIN4-SEP7 interaction.

The protein localises to the bud neck. Functionally, septins are GTPases involved in cytokinesis that assemble early in the cell cycle as a patch at the incipient bud site and form a ring before bud emergence, which transforms into an hour-glass shaped collar of cortical filaments that spans both sides of the mother-bud neck. This collar persists until just before cytokinesis, when it splits into two rings that occupy opposite sides of the neck. The septins at the bud neck serve as a structural scaffold that recruits different components involved in diverse processes at specific stages during the cell cycle. Many proteins bind asymmetrically to the septin collar. The septin assembly is regulated by protein kinase GIN4. Septins are also involved in cell morphogenesis, chlamydospores morphogenesis, bud site selection, chitin deposition, cell cycle regulation, cell compartmentalization and spore wall formation. SEP7 is required to convert hyphal septin rings into the hyphal-specific state and is necessary for CDC10 turnover during hyphal growth. This is Septation protein 7 (SEP7) from Candida albicans (strain SC5314 / ATCC MYA-2876) (Yeast).